Reading from the N-terminus, the 673-residue chain is DNA ligase (673 aa).

Residues 33–37 (DHQYD), 83–84 (SL), and Glu-117 each bind NAD(+). Lys-119 functions as the N6-AMP-lysine intermediate in the catalytic mechanism. Residues Arg-140, Glu-175, Lys-282, and Lys-306 each contribute to the NAD(+) site. Cys-400, Cys-403, Cys-418, and Cys-424 together coordinate Zn(2+). The BRCT domain occupies 592–673 (RGSSAISGKT…WVKMVEDARS (82 aa)).

Belongs to the NAD-dependent DNA ligase family. LigA subfamily. Requires Mg(2+) as cofactor. Mn(2+) serves as cofactor.

It carries out the reaction NAD(+) + (deoxyribonucleotide)n-3'-hydroxyl + 5'-phospho-(deoxyribonucleotide)m = (deoxyribonucleotide)n+m + AMP + beta-nicotinamide D-nucleotide.. Functionally, DNA ligase that catalyzes the formation of phosphodiester linkages between 5'-phosphoryl and 3'-hydroxyl groups in double-stranded DNA using NAD as a coenzyme and as the energy source for the reaction. It is essential for DNA replication and repair of damaged DNA. In Anaplasma marginale (strain Florida), this protein is DNA ligase.